The primary structure comprises 125 residues: Putative iron-sulfur cluster insertion protein ErpA 2 (125 aa).

Iron-sulfur cluster contacts are provided by C53, C117, and C119.

Belongs to the HesB/IscA family. Homodimer. It depends on iron-sulfur cluster as a cofactor.

Its function is as follows. Required for insertion of 4Fe-4S clusters. This chain is Putative iron-sulfur cluster insertion protein ErpA 2, found in Polaromonas naphthalenivorans (strain CJ2).